The chain runs to 381 residues: 4-hydroxy-3-methylbut-2-en-1-yl diphosphate synthase (flavodoxin) (381 aa).

[4Fe-4S] cluster-binding residues include cysteine 280, cysteine 283, cysteine 315, and glutamate 322.

It belongs to the IspG family. The cofactor is [4Fe-4S] cluster.

It catalyses the reaction (2E)-4-hydroxy-3-methylbut-2-enyl diphosphate + oxidized [flavodoxin] + H2O + 2 H(+) = 2-C-methyl-D-erythritol 2,4-cyclic diphosphate + reduced [flavodoxin]. It functions in the pathway isoprenoid biosynthesis; isopentenyl diphosphate biosynthesis via DXP pathway; isopentenyl diphosphate from 1-deoxy-D-xylulose 5-phosphate: step 5/6. In terms of biological role, converts 2C-methyl-D-erythritol 2,4-cyclodiphosphate (ME-2,4cPP) into 1-hydroxy-2-methyl-2-(E)-butenyl 4-diphosphate. The polypeptide is 4-hydroxy-3-methylbut-2-en-1-yl diphosphate synthase (flavodoxin) (Clavibacter michiganensis subsp. michiganensis (strain NCPPB 382)).